Reading from the N-terminus, the 1370-residue chain is DNA-directed RNA polymerase subunit beta (1370 aa).

The protein belongs to the RNA polymerase beta chain family. As to quaternary structure, the RNAP catalytic core consists of 2 alpha, 1 beta, 1 beta' and 1 omega subunit. When a sigma factor is associated with the core the holoenzyme is formed, which can initiate transcription.

It carries out the reaction RNA(n) + a ribonucleoside 5'-triphosphate = RNA(n+1) + diphosphate. Functionally, DNA-dependent RNA polymerase catalyzes the transcription of DNA into RNA using the four ribonucleoside triphosphates as substrates. The polypeptide is DNA-directed RNA polymerase subunit beta (Verminephrobacter eiseniae (strain EF01-2)).